Reading from the N-terminus, the 509-residue chain is Histidine--tRNA ligase, cytoplasmic (509 aa).

A2 carries the post-translational modification N-acetylalanine. Positions D3–P59 constitute a WHEP-TRS domain. A Phosphoserine modification is found at S66. L-histidine-binding positions include D130–T132, R157, Q173, D177, R326, and Y330–Y331. S356 carries the post-translational modification Phosphoserine.

Belongs to the class-II aminoacyl-tRNA synthetase family. As to quaternary structure, homodimer.

Its subcellular location is the cytoplasm. It catalyses the reaction tRNA(His) + L-histidine + ATP = L-histidyl-tRNA(His) + AMP + diphosphate + H(+). Its function is as follows. Catalyzes the ATP-dependent ligation of histidine to the 3'-end of its cognate tRNA, via the formation of an aminoacyl-adenylate intermediate (His-AMP). Plays a role in axon guidance. This Mus musculus (Mouse) protein is Histidine--tRNA ligase, cytoplasmic (Hars1).